A 228-amino-acid chain; its full sequence is Probable septum site-determining protein MinC (228 aa).

Belongs to the MinC family. As to quaternary structure, interacts with MinD and FtsZ.

Cell division inhibitor that blocks the formation of polar Z ring septums. Rapidly oscillates between the poles of the cell to destabilize FtsZ filaments that have formed before they mature into polar Z rings. Prevents FtsZ polymerization. The polypeptide is Probable septum site-determining protein MinC (Bacillus cereus (strain B4264)).